A 66-amino-acid chain; its full sequence is MKTGIHPNYKTVMVKCTCGNEFESGSVKEEIRVETCSECHPFYTGRQKFAEAGGRVDRFNKKYGLK.

Zn(2+) contacts are provided by Cys16, Cys18, Cys36, and Cys39.

Belongs to the bacterial ribosomal protein bL31 family. Type A subfamily. As to quaternary structure, part of the 50S ribosomal subunit. Zn(2+) is required as a cofactor.

Binds the 23S rRNA. The polypeptide is Large ribosomal subunit protein bL31 (Priestia megaterium (Bacillus megaterium)).